The following is a 212-amino-acid chain: RNA chaperone ProQ (212 aa).

The disordered stretch occupies residues 107-153 (QDKAKAKRVAQAKSANPAAKTAKKPVKKPVAKRPKQTQSSKPAKEPV). The segment covering 117–126 (QAKSANPAAK) has biased composition (low complexity). Residues 127–141 (TAKKPVKKPVAKRPK) are compositionally biased toward basic residues.

It belongs to the ProQ family.

The protein localises to the cytoplasm. In terms of biological role, RNA chaperone with significant RNA binding, RNA strand exchange and RNA duplexing activities. This chain is RNA chaperone ProQ, found in Shewanella halifaxensis (strain HAW-EB4).